Reading from the N-terminus, the 129-residue chain is D-ribose pyranase (129 aa).

His-20 (proton donor) is an active-site residue. Residues Asp-28, His-96, and 118–120 contribute to the substrate site; that span reads YAN.

It belongs to the RbsD / FucU family. RbsD subfamily. In terms of assembly, homodecamer.

The protein localises to the cytoplasm. It carries out the reaction beta-D-ribopyranose = beta-D-ribofuranose. It participates in carbohydrate metabolism; D-ribose degradation; D-ribose 5-phosphate from beta-D-ribopyranose: step 1/2. Functionally, catalyzes the interconversion of beta-pyran and beta-furan forms of D-ribose. The protein is D-ribose pyranase of Streptomyces coelicolor (strain ATCC BAA-471 / A3(2) / M145).